The sequence spans 71 residues: SRY-related protein LG27 (71 aa).

A DNA-binding region (HMG box) is located at residues 1–68 (VKRPMNAFMV…KHMADYPNYK (68 aa)).

It is found in the nucleus. The protein is SRY-related protein LG27 of Eublepharis macularius (Leopard gecko).